The chain runs to 613 residues: Ribosome-associated molecular chaperone SSB1 (613 aa).

Positions 1–391 (MADGVFQGAI…ILTGQSTSDE (391 aa)) are nucleotide binding domain (NBD). ATP is bound by residues 16 to 18 (TTY), Lys-73, 205 to 207 (GGT), 271 to 278 (ERAKRTLS), and Gly-342. An inter-domain linker region spans residues 392–402 (TKDLLLLDVAP). Residues 403–613 (LSLGVGMQGD…RVVTKAMSSR (211 aa)) are substrate binding domain (SBD). The lid domain (SBDalpha) stretch occupies residues 516-612 (SEDIEKMVNQ…KRVVTKAMSS (97 aa)). Residues 574–582 (IEAALADAL) carry the Nuclear export signal motif.

This sequence belongs to the heat shock protein 70 family. Ssb-type Hsp70 subfamily. In terms of assembly, binds to ribosomes. Binds close to the ribosomal tunnel exit via contacts with both ribosomal proteins and rRNA. Directly interacts with nascent polypeptides. This interaction is dependent on the ribosome-associated complex (RAC). Interacts with SSE1. Interacts with FES1.

The protein localises to the cytoplasm. The enzyme catalyses ATP + H2O = ADP + phosphate + H(+). Ribosome-bound, Hsp70-type chaperone that assists in the cotranslational folding of newly synthesized proteins in the cytosol. Stimulates folding by interacting with nascent chains, binding to short, largely hydrophobic sequences exposed by unfolded proteins, thereby stabilizing longer, more slowly translated, and aggregation-prone nascent polypeptides and domains that cannot fold stably until fully synthesized. The Hsp70-protein substrate interaction depends on ATP-binding and on allosteric regulation between the NBD and the SBD. The ATP-bound state is characterized by a fast exchange rate of substrate (low affinity state), while in the ADP-bound state exchange is much slower (high affinity state). During the Hsp70 cycle, the chaperone switches between the ATP-bound state (open conformation) and the ADP-bound state (closed conformation) by major conformational rearrangements involving mainly the lid domain. Ssb cooperates with a specific Hsp40/Hsp70 co-chaperone termed the ribosome-associated complex (RAC), which stimulates the ATPase activity of the ribosome-associated pool of Ssbs and switches it to the high affinity substrate binding state. Hsp110 chaperone SSE1 and FES1 act as nucleotide exchange factors that cause substrate release. The sequence is that of Ribosome-associated molecular chaperone SSB1 (SSB1) from Nakaseomyces delphensis (Yeast).